The primary structure comprises 545 residues: Coiled-coil domain-containing protein 60 (545 aa).

The stretch at 72–99 forms a coiled coil; sequence NILREENAMKKKQQLLQKLKEEELNKFQ. The segment at 224 to 284 is disordered; that stretch reads PAIRTAMASR…DNESSSTKPE (61 aa). Residues 238-259 are compositionally biased toward low complexity; that stretch reads RGSTLSLTRTSGGSSPQSSMMS.

This chain is Coiled-coil domain-containing protein 60 (Ccdc60), found in Mus musculus (Mouse).